A 529-amino-acid chain; its full sequence is Bifunctional purine biosynthesis protein PurH (529 aa).

Residues 1–148 enclose the MGS-like domain; sequence MQQHRPVRRA…KNHKDVAIVV (148 aa).

Belongs to the PurH family.

It carries out the reaction (6R)-10-formyltetrahydrofolate + 5-amino-1-(5-phospho-beta-D-ribosyl)imidazole-4-carboxamide = 5-formamido-1-(5-phospho-D-ribosyl)imidazole-4-carboxamide + (6S)-5,6,7,8-tetrahydrofolate. The catalysed reaction is IMP + H2O = 5-formamido-1-(5-phospho-D-ribosyl)imidazole-4-carboxamide. It participates in purine metabolism; IMP biosynthesis via de novo pathway; 5-formamido-1-(5-phospho-D-ribosyl)imidazole-4-carboxamide from 5-amino-1-(5-phospho-D-ribosyl)imidazole-4-carboxamide (10-formyl THF route): step 1/1. It functions in the pathway purine metabolism; IMP biosynthesis via de novo pathway; IMP from 5-formamido-1-(5-phospho-D-ribosyl)imidazole-4-carboxamide: step 1/1. This is Bifunctional purine biosynthesis protein PurH from Erwinia tasmaniensis (strain DSM 17950 / CFBP 7177 / CIP 109463 / NCPPB 4357 / Et1/99).